A 286-amino-acid polypeptide reads, in one-letter code: Phosphatidylglycerol--prolipoprotein diacylglyceryl transferase (286 aa).

7 helical membrane passes run 24-44 (IGPL…LFAW), 72-92 (FIVW…VLFY), 104-124 (IFAV…VILA), 140-160 (FDVV…ANFI), 190-210 (LYEA…LTHS), 218-238 (RFVG…VEFF), and 253-273 (WLTM…WAMA). R155 contacts a 1,2-diacyl-sn-glycero-3-phospho-(1'-sn-glycerol).

It belongs to the Lgt family.

It localises to the cell inner membrane. It catalyses the reaction L-cysteinyl-[prolipoprotein] + a 1,2-diacyl-sn-glycero-3-phospho-(1'-sn-glycerol) = an S-1,2-diacyl-sn-glyceryl-L-cysteinyl-[prolipoprotein] + sn-glycerol 1-phosphate + H(+). It functions in the pathway protein modification; lipoprotein biosynthesis (diacylglyceryl transfer). Catalyzes the transfer of the diacylglyceryl group from phosphatidylglycerol to the sulfhydryl group of the N-terminal cysteine of a prolipoprotein, the first step in the formation of mature lipoproteins. In Mesorhizobium japonicum (strain LMG 29417 / CECT 9101 / MAFF 303099) (Mesorhizobium loti (strain MAFF 303099)), this protein is Phosphatidylglycerol--prolipoprotein diacylglyceryl transferase.